We begin with the raw amino-acid sequence, 183 residues long: ATP synthase subunit delta (183 aa).

The protein belongs to the ATPase delta chain family. F-type ATPases have 2 components, F(1) - the catalytic core - and F(0) - the membrane proton channel. F(1) has five subunits: alpha(3), beta(3), gamma(1), delta(1), epsilon(1). F(0) has three main subunits: a(1), b(2) and c(10-14). The alpha and beta chains form an alternating ring which encloses part of the gamma chain. F(1) is attached to F(0) by a central stalk formed by the gamma and epsilon chains, while a peripheral stalk is formed by the delta and b chains.

The protein localises to the cell membrane. In terms of biological role, f(1)F(0) ATP synthase produces ATP from ADP in the presence of a proton or sodium gradient. F-type ATPases consist of two structural domains, F(1) containing the extramembraneous catalytic core and F(0) containing the membrane proton channel, linked together by a central stalk and a peripheral stalk. During catalysis, ATP synthesis in the catalytic domain of F(1) is coupled via a rotary mechanism of the central stalk subunits to proton translocation. Functionally, this protein is part of the stalk that links CF(0) to CF(1). It either transmits conformational changes from CF(0) to CF(1) or is implicated in proton conduction. This is ATP synthase subunit delta from Mycoplasmopsis synoviae (strain 53) (Mycoplasma synoviae).